The sequence spans 499 residues: Centrosomal protein of 57 kDa (499 aa).

The span at 1-35 (MAAASVSETSASQFSNILAEPSKSNGSMVRHSSSP) shows a compositional bias: polar residues. Positions 1 to 58 (MAAASVSETSASQFSNILAEPSKSNGSMVRHSSSPYVVYPPDKPFLNSDLRRSPNKPT) are disordered. Ser-53 bears the Phosphoserine mark. The centrosome localization domain (CLD) stretch occupies residues 58–239 (TFAYPESNSR…KAAQLQTGLE (182 aa)). A coiled-coil region spans residues 63-241 (ESNSRAIFSA…AQLQTGLEVN (179 aa)). The mediates interaction with microtubules stretch occupies residues 277-490 (AVQPHYRLCL…KDMQSIQNSL (214 aa)). Disordered stretches follow at residues 334-357 (KQVSSRTGKSKKSATPPSSSSVNE) and 431-476 (KQKK…SRKN). The segment covering 346-357 (SATPPSSSSVNE) has biased composition (low complexity). The stretch at 389–450 (TVELKDNLEC…KTLDEEGNSS (62 aa)) forms a coiled coil. Positions 431–444 (KQKKELKATRKTLD) are enriched in basic and acidic residues. A compositionally biased stretch (low complexity) spans 449–459 (SSSRSTTTGTT). Residues 460-474 (NKKDFAKPRPGEKSR) are compositionally biased toward basic and acidic residues.

This sequence belongs to the translokin family. Homodimer and homooligomer. Interacts with FGF2 and RAP80. Does not interact with FGF1 or FGF2 isoform 24 kDa. Interacts with microtubules.

Its subcellular location is the nucleus. It is found in the cytoplasm. The protein resides in the cytoskeleton. It localises to the microtubule organizing center. The protein localises to the centrosome. Its function is as follows. Centrosomal protein which may be required for microtubule attachment to centrosomes. May act by forming ring-like structures around microtubules. Mediates nuclear translocation and mitogenic activity of the internalized growth factor FGF2. The sequence is that of Centrosomal protein of 57 kDa (CEP57) from Bos taurus (Bovine).